The chain runs to 141 residues: Nucleoside diphosphate kinase (141 aa).

6 residues coordinate ATP: Lys11, Phe59, Arg87, Thr93, Arg104, and Asn114. Residue His117 is the Pros-phosphohistidine intermediate of the active site.

Belongs to the NDK family. As to quaternary structure, homotetramer. Mg(2+) is required as a cofactor.

Its subcellular location is the cytoplasm. It catalyses the reaction a 2'-deoxyribonucleoside 5'-diphosphate + ATP = a 2'-deoxyribonucleoside 5'-triphosphate + ADP. The enzyme catalyses a ribonucleoside 5'-diphosphate + ATP = a ribonucleoside 5'-triphosphate + ADP. Major role in the synthesis of nucleoside triphosphates other than ATP. The ATP gamma phosphate is transferred to the NDP beta phosphate via a ping-pong mechanism, using a phosphorylated active-site intermediate. The polypeptide is Nucleoside diphosphate kinase (Pseudomonas putida (strain GB-1)).